The chain runs to 81 residues: Photosystem I iron-sulfur center (81 aa).

4Fe-4S ferredoxin-type domains follow at residues 2 to 31 (AHTVKIYDTCIGCTQCVRACPTDVLEMVPW) and 37 to 68 (GQIASSPRTEDCVGCKRCETACPTDFLSIRVY). Positions 11, 14, 17, 21, 48, 51, 54, and 58 each coordinate [4Fe-4S] cluster.

In terms of assembly, the cyanobacterial PSI reaction center is composed of one copy each of PsaA,B,C,D,E,F,I,J,K,L,M and X, and forms trimeric complexes. The cofactor is [4Fe-4S] cluster.

Its subcellular location is the cellular thylakoid membrane. It catalyses the reaction reduced [plastocyanin] + hnu + oxidized [2Fe-2S]-[ferredoxin] = oxidized [plastocyanin] + reduced [2Fe-2S]-[ferredoxin]. Its function is as follows. Apoprotein for the two 4Fe-4S centers FA and FB of photosystem I (PSI); essential for photochemical activity. FB is the terminal electron acceptor of PSI, donating electrons to ferredoxin. The C-terminus interacts with PsaA/B/D and helps assemble the protein into the PSI complex. Required for binding of PsaD and PsaE to PSI. PSI is a plastocyanin/cytochrome c6-ferredoxin oxidoreductase, converting photonic excitation into a charge separation, which transfers an electron from the donor P700 chlorophyll pair to the spectroscopically characterized acceptors A0, A1, FX, FA and FB in turn. In Synechococcus elongatus, this protein is Photosystem I iron-sulfur center (psaC).